The following is a 94-amino-acid chain: Small ribosomal subunit protein uS19c (94 aa).

It belongs to the universal ribosomal protein uS19 family.

The protein localises to the plastid. It localises to the chloroplast. Functionally, protein S19 forms a complex with S13 that binds strongly to the 16S ribosomal RNA. The protein is Small ribosomal subunit protein uS19c of Pleurastrum terricola (Filamentous green alga).